Reading from the N-terminus, the 264-residue chain is Thiazole synthase (264 aa).

Lys98 serves as the catalytic Schiff-base intermediate with DXP. Residues Gly159, Ala185 to Gly186, and Ala207 to Ser208 each bind 1-deoxy-D-xylulose 5-phosphate.

The protein belongs to the ThiG family. Homotetramer. Forms heterodimers with either ThiH or ThiS.

The protein localises to the cytoplasm. The enzyme catalyses [ThiS sulfur-carrier protein]-C-terminal-Gly-aminoethanethioate + 2-iminoacetate + 1-deoxy-D-xylulose 5-phosphate = [ThiS sulfur-carrier protein]-C-terminal Gly-Gly + 2-[(2R,5Z)-2-carboxy-4-methylthiazol-5(2H)-ylidene]ethyl phosphate + 2 H2O + H(+). The protein operates within cofactor biosynthesis; thiamine diphosphate biosynthesis. Catalyzes the rearrangement of 1-deoxy-D-xylulose 5-phosphate (DXP) to produce the thiazole phosphate moiety of thiamine. Sulfur is provided by the thiocarboxylate moiety of the carrier protein ThiS. In vitro, sulfur can be provided by H(2)S. This Streptomyces griseus subsp. griseus (strain JCM 4626 / CBS 651.72 / NBRC 13350 / KCC S-0626 / ISP 5235) protein is Thiazole synthase.